The sequence spans 502 residues: Probable cytosol aminopeptidase (502 aa).

Residues K269 and D274 each contribute to the Mn(2+) site. K281 is a catalytic residue. Mn(2+) contacts are provided by D292, D351, and E353. R355 is an active-site residue.

The protein belongs to the peptidase M17 family. Mn(2+) is required as a cofactor.

It is found in the cytoplasm. The enzyme catalyses Release of an N-terminal amino acid, Xaa-|-Yaa-, in which Xaa is preferably Leu, but may be other amino acids including Pro although not Arg or Lys, and Yaa may be Pro. Amino acid amides and methyl esters are also readily hydrolyzed, but rates on arylamides are exceedingly low.. It carries out the reaction Release of an N-terminal amino acid, preferentially leucine, but not glutamic or aspartic acids.. Its function is as follows. Presumably involved in the processing and regular turnover of intracellular proteins. Catalyzes the removal of unsubstituted N-terminal amino acids from various peptides. This chain is Probable cytosol aminopeptidase, found in Shewanella sediminis (strain HAW-EB3).